Reading from the N-terminus, the 2273-residue chain is Linear gramicidin synthase subunit A (2273 aa).

The segment at 1 to 144 is GART; sequence MRILFLTTFM…AIEELFIREW (144 aa). Carrier domains lie at 693 to 767 and 1724 to 1798; these read APTD…TEQK and APRT…TSEQ. Residues serine 728 and serine 1759 each carry the O-(pantetheine 4'-phosphoryl)serine modification.

It belongs to the ATP-dependent AMP-binding enzyme family. In terms of assembly, large multienzyme complex composed of 4 subunits; LgrA, LgrB, LgrC and LgrD. The cofactor is pantetheine 4'-phosphate.

Functionally, activates valine (or leucine, but much less frequently), and then glycine and catalyzes the formation of the peptide bond in the first step of peptide synthesis. This enzyme may also play a role in N-formylation of the first amino acid residue in the synthesized dipeptide. The chain is Linear gramicidin synthase subunit A (lgrA) from Brevibacillus parabrevis.